The primary structure comprises 336 residues: Protein-arginine N-acetylglucosaminyltransferase SseK1 (336 aa).

Arginine 24 carries an N-beta-linked (GlcNAc) arginine; by autocatalysis glycan. UDP-N-acetyl-alpha-D-glucosamine contacts are provided by residues 50 to 52 (QWF) and tyrosine 74. Residue arginine 152 is glycosylated (N-beta-linked (GlcNAc) arginine; by autocatalysis). The DXD motif signature appears at 223–225 (DAD). 224–225 (AD) provides a ligand contact to UDP-N-acetyl-alpha-D-glucosamine. Aspartate 225 provides a ligand contact to Mn(2+). Residue glutamate 255 is the Proton acceptor of the active site. 2 residues coordinate Mn(2+): asparagine 322 and serine 324. Residues serine 324 and serine 329 each contribute to the UDP-N-acetyl-alpha-D-glucosamine site. N-beta-linked (GlcNAc) arginine; by autocatalysis glycosylation is present at arginine 333.

Belongs to the glycosyltransferase NleB family. Requires Mn(2+) as cofactor. Auto-glycosylated: arginine GlcNAcylation is required for activity toward death domain-containing host target proteins.

The protein localises to the secreted. It localises to the host cytoplasm. Its subcellular location is the host cytosol. The catalysed reaction is L-arginyl-[protein] + UDP-N-acetyl-alpha-D-glucosamine = N(omega)-(N-acetyl-beta-D-glucosaminyl)-L-arginyl-[protein] + UDP + H(+). With respect to regulation, protein-arginine N-acetylglucosaminyltransferase activity is inhibited by 100066N compound (flavone analog) and 102644N compound (a substituted isoxazole). Its function is as follows. Protein-arginine N-acetylglucosaminyltransferase effector that disrupts TNF signaling in infected cells, including NF-kappa-B signaling, apoptosis and necroptosis. Acts by catalyzing the transfer of a single N-acetylglucosamine (GlcNAc) to a conserved arginine residue in the death domain of host proteins TRADD and, to a lower extent, FADD: arginine GlcNAcylation prevents homotypic/heterotypic death domain interactions and assembly of the oligomeric TNF-alpha receptor complex, thereby disrupting TNF signaling. Also acts on host proteins without a death domain: catalyzes arginine GlcNAcylation of host GAPDH protein, thereby preventing GAPDH interaction with TRAF2, leading to inhibit NF-kappa-B signaling. Catalyzes GlcNAcylation of host tubulin-folding cofactor TBCB, thereby promoting microtubule stability. Also mediates auto-GlcNAcylation, which is required for activity toward death domain-containing host target proteins. The sequence is that of Protein-arginine N-acetylglucosaminyltransferase SseK1 from Salmonella enteritidis (strain 2009K0958).